Consider the following 306-residue polypeptide: Pantothenate kinase (306 aa).

An ATP-binding site is contributed by 90-97 (GSVAVGKS).

Belongs to the prokaryotic pantothenate kinase family.

The protein resides in the cytoplasm. The enzyme catalyses (R)-pantothenate + ATP = (R)-4'-phosphopantothenate + ADP + H(+). The protein operates within cofactor biosynthesis; coenzyme A biosynthesis; CoA from (R)-pantothenate: step 1/5. This is Pantothenate kinase from Lactococcus lactis subsp. cremoris (strain SK11).